A 1803-amino-acid polypeptide reads, in one-letter code: Transposon Ty4-J Gag-Pol polyprotein (1803 aa).

Residues 39–115 are a coiled coil; the sequence is RKVSIKDEQV…IQLLETNENN (77 aa). The ty4 protease stretch occupies residues 382–502; sequence NNHLSPVQNE…KTKMVLSRKY (121 aa). D415 (for protease activity; shared with dimeric partner) is an active-site residue. Residues 540–600 are integrase-type zinc finger-like; the sequence is AIKPTSSPGF…EPNEFWCQTC (61 aa). The 168-residue stretch at 620-787 folds into the Integrase catalytic domain; that stretch reads TDHEPGSSWC…LPLKAISRQP (168 aa). Mg(2+)-binding residues include D631 and D696. Residues 1224 to 1250 form a disordered region; that stretch reads KRKRKRHDKNNSLTSYELERDKKRSKK. The region spanning 1376 to 1511 is the Reverse transcriptase Ty1/copia-type domain; that stretch reads RNMFMKTLDI…DILGMDLVYN (136 aa). Mg(2+) contacts are provided by D1384, D1463, D1464, D1645, E1687, and D1721. One can recognise an RNase H Ty1/copia-type domain in the interval 1645–1791; it reads DASVGSEYDA…KRFIQVLKNK (147 aa).

In terms of assembly, the protease is a homodimer, whose active site consists of two apposed aspartic acid residues. Post-translationally, proteolytically processed into capsid protein (CA), Ty4 protease (PR), integrase (IN) and reverse transcriptase/ribonuclease H (RT) proteins. Initially, virus-like particles (VLPs) are composed of the structural unprocessed proteins Gag and Gag-Pol, and also contain the host initiator methionine tRNA (tRNA(i)-Met) which serves as a primer for minus-strand DNA synthesis, and a dimer of genomic Ty RNA. Processing of the polyproteins occurs within the particle and proceeds by an ordered pathway, called maturation. First, the protease (PR) is released by autocatalytic cleavage of the Gag-Pol polyprotein, and this cleavage is a prerequisite for subsequent processing at the remaining sites to release the mature structural and catalytic proteins. Maturation takes place prior to the RT reaction and is required to produce transposition-competent VLPs.

The protein resides in the cytoplasm. The protein localises to the nucleus. It carries out the reaction DNA(n) + a 2'-deoxyribonucleoside 5'-triphosphate = DNA(n+1) + diphosphate. It catalyses the reaction Endonucleolytic cleavage to 5'-phosphomonoester.. Its function is as follows. Capsid protein (CA) is the structural component of the virus-like particle (VLP), forming the shell that encapsulates the retrotransposons dimeric RNA genome. The aspartyl protease (PR) mediates the proteolytic cleavages of the Gag and Gag-Pol polyproteins after assembly of the VLP. In terms of biological role, reverse transcriptase/ribonuclease H (RT) is a multifunctional enzyme that catalyzes the conversion of the retro-elements RNA genome into dsDNA within the VLP. The enzyme displays a DNA polymerase activity that can copy either DNA or RNA templates, and a ribonuclease H (RNase H) activity that cleaves the RNA strand of RNA-DNA heteroduplexes during plus-strand synthesis and hydrolyzes RNA primers. The conversion leads to a linear dsDNA copy of the retrotransposon that includes long terminal repeats (LTRs) at both ends. Functionally, integrase (IN) targets the VLP to the nucleus, where a subparticle preintegration complex (PIC) containing at least integrase and the newly synthesized dsDNA copy of the retrotransposon must transit the nuclear membrane. Once in the nucleus, integrase performs the integration of the dsDNA into the host genome. The sequence is that of Transposon Ty4-J Gag-Pol polyprotein (TY4B-J) from Saccharomyces cerevisiae (strain ATCC 204508 / S288c) (Baker's yeast).